The chain runs to 302 residues: D-alanine--D-alanine ligase (302 aa).

One can recognise an ATP-grasp domain in the interval lysine 100–glutamate 295. Residue glutamine 126 to threonine 180 participates in ATP binding. Residues aspartate 250, glutamate 262, and asparagine 264 each contribute to the Mg(2+) site.

The protein belongs to the D-alanine--D-alanine ligase family. It depends on Mg(2+) as a cofactor. Requires Mn(2+) as cofactor.

The protein resides in the cytoplasm. The enzyme catalyses 2 D-alanine + ATP = D-alanyl-D-alanine + ADP + phosphate + H(+). It participates in cell wall biogenesis; peptidoglycan biosynthesis. Functionally, cell wall formation. The protein is D-alanine--D-alanine ligase of Maridesulfovibrio salexigens (strain ATCC 14822 / DSM 2638 / NCIMB 8403 / VKM B-1763) (Desulfovibrio salexigens).